The sequence spans 433 residues: ATP-sensitive inward rectifier potassium channel 12 (433 aa).

Topologically, residues 1–77 (MTAASRANPY…LADMFTTCVD (77 aa)) are cytoplasmic. Position 75 is an S-nitrosocysteine (Cys75). Residues 78-104 (IRWRYMLLIFSLAFLASWLLFGIIFWV) traverse the membrane as a helical segment. Residues Arg79 and Arg81 each contribute to the a 1,2-diacyl-sn-glycero-3-phospho-(1D-myo-inositol-4,5-bisphosphate) site. Residues 105 to 129 (IAVAHGDLEPAEGRGRTPCVMQVHG) lie on the Extracellular side of the membrane. Cys123 and Cys155 are disulfide-bonded. Positions 130 to 146 (FMAAFLFSIETQTTIGY) form an intramembrane region, helical; Pore-forming. Residues Thr143, Ile144, Gly145, and Tyr146 each contribute to the K(+) site. The short motif at 143 to 148 (TIGYGL) is the Selectivity filter element. Topologically, residues 147–155 (GLRCVTEEC) are extracellular. The chain crosses the membrane as a helical span at residues 156–183 (PVAVFMVVAQSIVGCIIDSFMIGAIMAK). Positions 183 and 188 each coordinate a 1,2-diacyl-sn-glycero-3-phospho-(1D-myo-inositol-4,5-bisphosphate). Topologically, residues 184 to 433 (MARPKKRAQT…QRPYRRESEI (250 aa)) are cytoplasmic. The interval 387-433 (DEEDEADGDQDGRSRDGLSPQARHDFDRLQAGGGVLEQRPYRRESEI) is disordered. The span at 396–414 (QDGRSRDGLSPQARHDFDR) shows a compositional bias: basic and acidic residues. The PDZ-binding signature appears at 431 to 433 (SEI).

Belongs to the inward rectifier-type potassium channel (TC 1.A.2.1) family. KCNJ12 subfamily. Homotetramer. Forms heteromer with KCNJ4. Can form heteromeric channels with Kir2.6/KCNJ18. Association, via its PDZ-recognition domain, with LIN7A, LIN7B, LIN7C, DLG1, CASK and APBA1 plays a key role in its localization and trafficking.

The protein localises to the membrane. Its subcellular location is the cell membrane. It localises to the sarcolemma. It is found in the T-tubule. It carries out the reaction K(+)(in) = K(+)(out). Activated by phosphatidylinositol 4,5-biphosphate (PtdIns(4,5)P2). PtdIns(4,5)P2 binding to the cytoplasmic side of the channel triggers a conformation change leading to channel opening. Inhibited by Ba(2+). Inward rectifying potassium channel that probably participates in controlling the resting membrane potential in electrically excitable cells. Probably participates in establishing action potential waveform and excitability of neuronal and muscle tissues. Inward rectifier potassium channels are characterized by a greater tendency to allow potassium to flow into the cell rather than out of it. Their voltage dependence is regulated by the concentration of extracellular potassium; as external potassium is raised, the voltage range of the channel opening shifts to more positive voltages. The inward rectification is mainly due to the blockage of outward current by internal magnesium. This Homo sapiens (Human) protein is ATP-sensitive inward rectifier potassium channel 12 (KCNJ12).